A 950-amino-acid chain; its full sequence is A disintegrin and metalloproteinase with thrombospondin motifs 15 (950 aa).

The N-terminal stretch at 1 to 18 (MLLLGISILALAWRPAGS) is a signal peptide. Residues 19 to 212 (SEPEWEVVVP…NRRRSGRAKR (194 aa)) constitute a propeptide that is removed on maturation. N-linked (GlcNAc...) asparagine glycosylation is present at Asn141. Positions 144–172 (APEAQRHSQGAHLLQRRGAPVGPSGDPTS) are disordered. Residues 172–179 (SRCGVASG) carry the Cysteine switch motif. Cys174 contacts Zn(2+). In terms of domain architecture, Peptidase M12B spans 218 to 427 (RYVETLVVAD…GHGDCLLDQP (210 aa)). 11 cysteine pairs are disulfide-bonded: Cys293–Cys345, Cys322–Cys327, Cys339–Cys422, Cys377–Cys406, Cys448–Cys470, Cys459–Cys480, Cys465–Cys499, Cys493–Cys504, Cys528–Cys565, Cys532–Cys570, and Cys543–Cys555. His361 lines the Zn(2+) pocket. Residue Glu362 is part of the active site. The Zn(2+) site is built by His365 and His371. A Disintegrin domain is found at 428–515 (SKPITLPEDL…ERHNPNKYRV (88 aa)). Residues 516 to 571 (DGSWAKWEPYGSCSRTCGGGVQLARRQCSNPTPANGGKYCEGVRVKYRSCNLEPCP) form the TSP type-1 1 domain. 3 N-linked (GlcNAc...) asparagine glycosylation sites follow: Asn591, Asn623, and Asn679. Positions 701–838 (AIPAGASSID…SNQVEQPDNR (138 aa)) are spacer. The interval 798 to 822 (FYLPKEPREDKSTRPKDPRGSPVLR) is disordered. Residues 802–816 (KEPREDKSTRPKDPR) are compositionally biased toward basic and acidic residues. TSP type-1 domains are found at residues 839–895 (PPAR…EPCP) and 896–949 (TWEL…VLRP).

Requires Zn(2+) as cofactor. In terms of processing, the precursor is cleaved by a furin endopeptidase. Glycosylated. Can be O-fucosylated by POFUT2 on a serine or a threonine residue found within the consensus sequence C1-X(2)-(S/T)-C2-G of the TSP type-1 repeat domains where C1 and C2 are the first and second cysteine residue of the repeat, respectively. Fucosylated repeats can then be further glycosylated by the addition of a beta-1,3-glucose residue by the glucosyltransferase, B3GALTL. Fucosylation mediates the efficient secretion of ADAMTS family members. Can be C-glycosylated with one or two mannose molecules on tryptophan residues within the consensus sequence W-X-X-W of the TPRs. Also N-glycosylated. These other glycosylations can also facilitate secretion. In the adult colon, highly expressed in the muscularis externa (inner circular smooth muscle and outer longitudinal smooth muscle), muscularis mucosa, submucosal glands, crypt, villi epithelial cells, goblet cells and lamina propria. Expressed at perimuscular and peritendious areas in the developing limbs.

It localises to the secreted. It is found in the extracellular space. The protein resides in the extracellular matrix. Its subcellular location is the cell surface. Metalloprotease which has proteolytic activity against the proteoglycan VCAN, cleaving it at the 'Glu-1401-|-1402-Ala' site. Cleaves VCAN in the pericellular matrix surrounding myoblasts, facilitating myoblast contact and fusion which is required for skeletal muscle development and regeneration. The chain is A disintegrin and metalloproteinase with thrombospondin motifs 15 (Adamts15) from Mus musculus (Mouse).